Consider the following 532-residue polypeptide: CTP synthase (532 aa).

An amidoligase domain region spans residues 1–267; the sequence is MTKYIFVTGG…DDIVLEHLQL (267 aa). Residue Ser-13 coordinates CTP. Ser-13 contributes to the UTP binding site. Residue 14-19 participates in ATP binding; the sequence is SIGKGI. L-glutamine is bound at residue Tyr-54. ATP is bound at residue Asp-71. Mg(2+)-binding residues include Asp-71 and Glu-141. CTP contacts are provided by residues 148–150, 188–193, and Lys-224; these read DIE and KTKPTQ. UTP contacts are provided by residues 188 to 193 and Lys-224; that span reads KTKPTQ. One can recognise a Glutamine amidotransferase type-1 domain in the interval 292–532; that stretch reads RIGLVGKYVS…DFVGAALKNK (241 aa). Gly-354 serves as a coordination point for L-glutamine. The active-site Nucleophile; for glutamine hydrolysis is the Cys-381. L-glutamine is bound by residues 382 to 385, Glu-405, and Arg-462; that span reads LGMQ. Residues His-507 and Glu-509 contribute to the active site.

It belongs to the CTP synthase family. In terms of assembly, homotetramer.

It carries out the reaction UTP + L-glutamine + ATP + H2O = CTP + L-glutamate + ADP + phosphate + 2 H(+). It catalyses the reaction L-glutamine + H2O = L-glutamate + NH4(+). The catalysed reaction is UTP + NH4(+) + ATP = CTP + ADP + phosphate + 2 H(+). It participates in pyrimidine metabolism; CTP biosynthesis via de novo pathway; CTP from UDP: step 2/2. Allosterically activated by GTP, when glutamine is the substrate; GTP has no effect on the reaction when ammonia is the substrate. The allosteric effector GTP functions by stabilizing the protein conformation that binds the tetrahedral intermediate(s) formed during glutamine hydrolysis. Inhibited by the product CTP, via allosteric rather than competitive inhibition. In terms of biological role, catalyzes the ATP-dependent amination of UTP to CTP with either L-glutamine or ammonia as the source of nitrogen. Regulates intracellular CTP levels through interactions with the four ribonucleotide triphosphates. This is CTP synthase from Listeria monocytogenes serovar 1/2a (strain ATCC BAA-679 / EGD-e).